We begin with the raw amino-acid sequence, 251 residues long: tRNA (guanine-N(7)-)-methyltransferase (251 aa).

S-adenosyl-L-methionine is bound by residues Gly-72, 95–96 (EI), 132–133 (NA), and Leu-152. Asp-155 is an active-site residue. An S-adenosyl-L-methionine-binding site is contributed by 230 to 232 (SEE).

It belongs to the class I-like SAM-binding methyltransferase superfamily. TrmB family.

The protein resides in the nucleus. It catalyses the reaction guanosine(46) in tRNA + S-adenosyl-L-methionine = N(7)-methylguanosine(46) in tRNA + S-adenosyl-L-homocysteine. It participates in tRNA modification; N(7)-methylguanine-tRNA biosynthesis. Its function is as follows. Catalyzes the formation of N(7)-methylguanine at position 46 (m7G46) in tRNA. The protein is tRNA (guanine-N(7)-)-methyltransferase of Drosophila willistoni (Fruit fly).